Reading from the N-terminus, the 151-residue chain is Non-specific lipid transfer protein GPI-anchored 30 (151 aa).

Positions 1–22 (MMMGMKFFSFYVVLLLVAASSG) are cleaved as a signal peptide. 4 disulfides stabilise this stretch: Cys32/Cys69, Cys39/Cys53, Cys54/Cys97, and Cys67/Cys106. The N-linked (GlcNAc...) asparagine glycan is linked to Asn44. Ser120 carries the GPI-anchor amidated serine lipid modification. The propeptide at 121–151 (SSIGNTFSQSYWMTTLAIAATVLSYCHHIIS) is removed in mature form.

Belongs to the plant LTP family. As to expression, expressed in vascular tissues of all organs. Expressed in seedlings, preferentially in hypocotyls and roots. Also observed in siliques.

The protein resides in the cell membrane. Lipid transfer protein that promotes the number of phloem (pro)cambial and pericycle cells. This chain is Non-specific lipid transfer protein GPI-anchored 30, found in Arabidopsis thaliana (Mouse-ear cress).